The sequence spans 258 residues: MIAISAVSSALLFSLLCEASTVVLLNSTDSSPPTNNFTDIEAALKAQLDSADIPKARRKRYISQNDMIAILDYHNQVRGKVFPPAANMEYMVWDENLAKSAEAWAATCIWDHGPSYLLRFLGQNLSVRTGRYRSILQLVKPWYDEVKDYAFPYPQDCNPRCPMRCFGPMCTHYTQMVWATSNRIGCAIHTCQNMNVWGSVWRRAVYLVCNYAPKGNWIGEAPYKVGVPCSSCPPSYGGSCTDNLCFPGVTSNYLYWFK.

Positions 1–19 (MIAISAVSSALLFSLLCEA) are cleaved as a signal peptide. The propeptide occupies 20–60 (STVVLLNSTDSSPPTNNFTDIEAALKAQLDSADIPKARRKR). N-linked (GlcNAc...) asparagine glycosylation is found at Asn26, Asn36, and Asn124. The SCP domain maps to 71–211 (LDYHNQVRGK…RRAVYLVCNY (141 aa)).

This sequence belongs to the CRISP family. N-glycosylated. Weakly expressed. Expressed at low level in prostate, mammary gland, salivary gland and thyroid gland.

The protein resides in the secreted. Serine protease inhibitor which displays weak inhibitory activity against trypsin. May play a role in facial patterning during embryonic development. This chain is Peptidase inhibitor 15 (PI15), found in Homo sapiens (Human).